A 180-amino-acid chain; its full sequence is Acireductone dioxygenase (180 aa).

Residues H97, H99, E103, and H141 each contribute to the Fe(2+) site. Ni(2+) contacts are provided by H97, H99, E103, and H141.

Belongs to the acireductone dioxygenase (ARD) family. Monomer. Requires Fe(2+) as cofactor. Ni(2+) serves as cofactor.

The catalysed reaction is 1,2-dihydroxy-5-(methylsulfanyl)pent-1-en-3-one + O2 = 3-(methylsulfanyl)propanoate + CO + formate + 2 H(+). It carries out the reaction 1,2-dihydroxy-5-(methylsulfanyl)pent-1-en-3-one + O2 = 4-methylsulfanyl-2-oxobutanoate + formate + 2 H(+). It participates in amino-acid biosynthesis; L-methionine biosynthesis via salvage pathway; L-methionine from S-methyl-5-thio-alpha-D-ribose 1-phosphate: step 5/6. In terms of biological role, catalyzes 2 different reactions between oxygen and the acireductone 1,2-dihydroxy-3-keto-5-methylthiopentene (DHK-MTPene) depending upon the metal bound in the active site. Fe-containing acireductone dioxygenase (Fe-ARD) produces formate and 2-keto-4-methylthiobutyrate (KMTB), the alpha-ketoacid precursor of methionine in the methionine recycle pathway. Ni-containing acireductone dioxygenase (Ni-ARD) produces methylthiopropionate, carbon monoxide and formate, and does not lie on the methionine recycle pathway. The sequence is that of Acireductone dioxygenase from Yersinia pseudotuberculosis serotype O:1b (strain IP 31758).